Reading from the N-terminus, the 258-residue chain is MTDDEVQWKPILVGGLSGLVAETLVFPLSTIITRVQSSLSFQQAGGFQHLYRGLSSVLVSTLPSASSFFFVYEYAKARQKPGVRNHLVSASVAEVVSCGILAPAEVVRQRAQISKTSVSQIFQSMIHNYRDLWHSFKGMCGRNVPATAFQFVLYEQFKKKFSATDHVFGAPKGAALSGAITAAVLTPLDVIKTQINLRPESYRKVVRRIYKENGIFGFEKGLGLRVFASSLGLSIYLGTYEHVKSHLHIRKAGEVSVA.

Solcar repeat units follow at residues 9-78, 81-160, and 165-246; these read KPIL…AKAR, PGVR…FKKK, and DHVF…VKSH. A run of 6 helical transmembrane segments spans residues 11 to 31, 53 to 73, 87 to 107, 139 to 159, 171 to 191, and 218 to 239; these read ILVGGLSGLVAETLVFPLSTI, GLSSVLVSTLPSASSFFFVYE, LVSASVAEVVSCGILAPAEVV, MCGRNVPATAFQFVLYEQFKK, PKGAALSGAITAAVLTPLDVI, and FEKGLGLRVFASSLGLSIYLGT.

The protein belongs to the mitochondrial carrier (TC 2.A.29) family.

The protein localises to the mitochondrion inner membrane. This is an uncharacterized protein from Schizosaccharomyces pombe (strain 972 / ATCC 24843) (Fission yeast).